A 415-amino-acid chain; its full sequence is Corticotropin-releasing factor receptor 1 (415 aa).

The N-terminal stretch at 1-24 (MLLAKTPCLLLVQVIAAGISFALT) is a signal peptide. Residues 25 to 111 (SLQDQCETLQ…CQEILKQEKK (87 aa)) lie on the Extracellular side of the membrane. Intrachain disulfides connect Cys30–Cys54, Cys44–Cys87, and Cys68–Cys102. Residues Asn38, Asn45, Asn78, and Asn90 are each glycosylated (N-linked (GlcNAc...) asparagine). A helical membrane pass occupies residues 112–142 (TKVHYHIAIVINFLGHSISLCALLVAFILFL). Residues 143–149 (RLRSIRC) are Cytoplasmic-facing. A helical membrane pass occupies residues 150–174 (LRNIIHWNLITAFILRNVTWFVMQL). Over 175–189 (TLSHEAHDSNVVWCR) the chain is Extracellular. The cysteines at positions 188 and 258 are disulfide-linked. The helical transmembrane segment at 190–218 (LVTIAHNYFYVTNFFWMFGEGCYLHTAIV) threads the bilayer. Over 219–225 (LTYSTDK) the chain is Cytoplasmic. The helical transmembrane segment at 226-253 (LRKWMFICIGWCIPFPIIVAWAIGKLYY) threads the bilayer. Residues 254–269 (DNEKCWFGKKAGVYTD) are Extracellular-facing. A helical membrane pass occupies residues 270–295 (FIYQGPVILVLLINFIFLFNIVRILM). Topologically, residues 296 to 306 (TKLRASTTSET) are cytoplasmic. Residues 307 to 331 (IQYRKAVKATLVLLPLLGITYMLFF) traverse the membrane as a helical segment. Residues 332–338 (VTPGEDE) lie on the Extracellular side of the membrane. Residues 339 to 368 (ISRIVFIYFNSFLQSFQGFFVSVFYCFLNS) traverse the membrane as a helical segment. The Cytoplasmic portion of the chain corresponds to 369–415 (EVRSAVRKRWHRWQDKHSIRARVARAMSIPTSPTRISFHSIKQSSAI).

This sequence belongs to the G-protein coupled receptor 2 family. As to quaternary structure, interacts (via N-terminal extracellular domain) with CRF and UCN.

The protein localises to the cell membrane. G-protein coupled receptor for CRH (corticotropin-releasing factor) and UCN (urocortin). Has high affinity for CRH and UCN. Ligand binding causes a conformation change that triggers signaling via guanine nucleotide-binding proteins (G proteins) and down-stream effectors, such as adenylate cyclase. Promotes the activation of adenylate cyclase, leading to increased intracellular cAMP levels. The polypeptide is Corticotropin-releasing factor receptor 1 (crhr1) (Xenopus laevis (African clawed frog)).